The sequence spans 121 residues: Large ribosomal subunit protein uL18 (121 aa).

Belongs to the universal ribosomal protein uL18 family. In terms of assembly, part of the 50S ribosomal subunit; part of the 5S rRNA/L5/L18/L25 subcomplex. Contacts the 5S and 23S rRNAs.

In terms of biological role, this is one of the proteins that bind and probably mediate the attachment of the 5S RNA into the large ribosomal subunit, where it forms part of the central protuberance. The protein is Large ribosomal subunit protein uL18 of Polaromonas sp. (strain JS666 / ATCC BAA-500).